The following is a 117-amino-acid chain: Large ribosomal subunit protein bL19 (117 aa).

This sequence belongs to the bacterial ribosomal protein bL19 family.

Functionally, this protein is located at the 30S-50S ribosomal subunit interface and may play a role in the structure and function of the aminoacyl-tRNA binding site. In Alkalilimnicola ehrlichii (strain ATCC BAA-1101 / DSM 17681 / MLHE-1), this protein is Large ribosomal subunit protein bL19.